The sequence spans 401 residues: Subtilisin-like protease 10 (401 aa).

A signal peptide spans 1–19; sequence MLFLKAVIAILSVLPAADA. The propeptide occupies 20 to 116; the sequence is AAILNFENKQ…IEPDRMASAQ (97 aa). Residues 35–112 form the Inhibitor I9 domain; it reads SYIVVLKNDI…QVDYIEPDRM (78 aa). The 276-residue stretch at 126–401 folds into the Peptidase S8 domain; sequence SWGLGRISHQ…NRLLYNGSGQ (276 aa). Active-site charge relay system residues include aspartate 158 and histidine 189. The N-linked (GlcNAc...) asparagine glycan is linked to asparagine 250. The active-site Charge relay system is serine 347. N-linked (GlcNAc...) asparagine glycosylation is present at asparagine 397.

This sequence belongs to the peptidase S8 family.

It localises to the secreted. Its function is as follows. Secreted subtilisin-like serine protease with keratinolytic activity that contributes to pathogenicity. This is Subtilisin-like protease 10 (SUB10) from Arthroderma otae (strain ATCC MYA-4605 / CBS 113480) (Microsporum canis).